Here is a 361-residue protein sequence, read N- to C-terminus: Deoxyhypusine hydroxylase (361 aa).

4 HEAT-like PBS-type repeats span residues 59–85 (LKHELAYVLGQLLNTRALPTLSRVLEN), 94–120 (VRHEAAEALGAIGAEESLPILRKYMQD), 183–211 (QRYRAMFALRDFGAGSKEAVEALADGFRD), and 216–242 (FRHEIAYIFGQLSSPYSIPSLLSRLRD). Fe cation contacts are provided by H61, E62, H96, and E97. Residues H218, E219, H251, and E252 each contribute to the Fe cation site.

Belongs to the deoxyhypusine hydroxylase family. Requires Fe(2+) as cofactor.

The protein localises to the cytoplasm. Its subcellular location is the nucleus. The catalysed reaction is [eIF5A protein]-deoxyhypusine + AH2 + O2 = [eIF5A protein]-hypusine + A + H2O. It functions in the pathway protein modification; eIF5A hypusination. Catalyzes the hydroxylation of the N(6)-(4-aminobutyl)-L-lysine intermediate to form hypusine, an essential post-translational modification only found in mature eIF-5A factor. The protein is Deoxyhypusine hydroxylase of Cryptococcus neoformans var. neoformans serotype D (strain B-3501A) (Filobasidiella neoformans).